Reading from the N-terminus, the 215-residue chain is Pyrrolidone-carboxylate peptidase (215 aa).

Active-site residues include glutamate 78, cysteine 141, and histidine 165.

Belongs to the peptidase C15 family. In terms of assembly, homotetramer.

It is found in the cytoplasm. The catalysed reaction is Release of an N-terminal pyroglutamyl group from a polypeptide, the second amino acid generally not being Pro.. Functionally, removes 5-oxoproline from various penultimate amino acid residues except L-proline. The polypeptide is Pyrrolidone-carboxylate peptidase (Lacticaseibacillus paracasei (strain ATCC 334 / BCRC 17002 / CCUG 31169 / CIP 107868 / KCTC 3260 / NRRL B-441) (Lactobacillus paracasei)).